A 1380-amino-acid chain; its full sequence is Inverted formin-2 (1380 aa).

The region spanning 1–330 (MSLKEGAHTK…RAVLLADDCQ (330 aa)) is the GBD/FH3 domain. Disordered stretches follow at residues 341 to 391 (LVTS…SGIP) and 440 to 541 (ISTS…PPPL). Positions 343–352 (TSKKHPSKEK) are enriched in basic residues. Basic and acidic residues predominate over residues 367-385 (QTDKPKDESCEEKTVKKDP). The region spanning 432 to 592 (VVSNAIDRIS…DYSLGYLPKA (161 aa)) is the FH1 domain. Pro residues-rich tracts occupy residues 446-470 (LPPPLPPPLPGTELSLPPPPPPPLP) and 478-541 (TPPP…PPPL). In terms of domain architecture, FH2 spans 593 to 981 (YFKVNKPTLK…AEKRKKQLAD (389 aa)). Coiled coils occupy residues 879-930 (LKKL…KLAD) and 956-991 (LKAKKDNKDRKEQAVKAEKRKKQLADEEAKRQKGEN). The region spanning 1009–1024 (DALLADIKKGFQLRKT) is the WH2 domain. 3 disordered regions span residues 1026 to 1049 (KTKTEADSCPKPVSSETTGTDGTD), 1188 to 1244 (HKER…LSEA), and 1260 to 1380 (FQSS…CVVQ). Polar residues-rich tracts occupy residues 1206–1244 (GTESSSNQNNALNEGSQQHHNNTANESLQQAQNSALSEA), 1260–1284 (FQSSALNADSQPSHTSVVGSAQAQR), and 1294–1303 (TRDTTVTEGS). Basic and acidic residues predominate over residues 1306 to 1322 (EEDKCNDEGYPEHKTMG). Low complexity predominate over residues 1328 to 1339 (SSSHSTTLQQSS). Basic residues predominate over residues 1345 to 1359 (VKRGSSKHKKKRRSS).

This sequence belongs to the formin homology family.

In Xenopus tropicalis (Western clawed frog), this protein is Inverted formin-2 (inf2).